Consider the following 511-residue polypeptide: Cobyric acid synthase (511 aa).

The 193-residue stretch at 251–443 folds into the GATase cobBQ-type domain; the sequence is LLDIAIICLP…IHGIFDNDVF (193 aa). Cysteine 332 serves as the catalytic Nucleophile. Residue histidine 435 is part of the active site.

The protein belongs to the CobB/CobQ family. CobQ subfamily.

It participates in cofactor biosynthesis; adenosylcobalamin biosynthesis. In terms of biological role, catalyzes amidations at positions B, D, E, and G on adenosylcobyrinic A,C-diamide. NH(2) groups are provided by glutamine, and one molecule of ATP is hydrogenolyzed for each amidation. The chain is Cobyric acid synthase from Listeria monocytogenes serotype 4a (strain HCC23).